Here is a 196-residue protein sequence, read N- to C-terminus: Large ribosomal subunit protein bL17 (196 aa).

Residues alanine 133–lysine 196 form a disordered region. The span at alanine 134–alanine 143 shows a compositional bias: basic and acidic residues. The span at glutamate 152 to alanine 164 shows a compositional bias: acidic residues. Positions alanine 184–lysine 196 are enriched in basic and acidic residues.

Belongs to the bacterial ribosomal protein bL17 family. In terms of assembly, part of the 50S ribosomal subunit. Contacts protein L32.

The sequence is that of Large ribosomal subunit protein bL17 from Arthrobacter sp. (strain FB24).